The primary structure comprises 322 residues: Transcription initiation factor IIB (322 aa).

Repeat copies occupy residues 125-213 (SLIN…VRDL) and 224-305 (NFVY…EIAQ).

This sequence belongs to the TFIIB family.

In terms of biological role, stabilizes TBP binding to an archaeal box-A promoter. Also responsible for recruiting RNA polymerase II to the pre-initiation complex (DNA-TBP-TFIIB). This Aeropyrum pernix (strain ATCC 700893 / DSM 11879 / JCM 9820 / NBRC 100138 / K1) protein is Transcription initiation factor IIB.